The following is a 352-amino-acid chain: MNVLGIETSCDETAVAIVKDGTHVCSNVVATQIPFHAPYRGIVPELASRKHIEWILPTVKEALARAQLTLADIDGIAVTHAPGLTGSLLVGLTFAKTLAWSMHLPFIAVNHLHAHFCAAHVEHDLAYPYVGLLASGGHALVCVVHDFDQVEALGATIDDAPGEAFDKVAAFYGFGYPGGKVIETLAEQGDARAARFPLPHFHGKGHRYDVSYSGLKTAVIHQLDHFWNKEYERTAQNIAAAFQACAINILLRPLARALQDTGLPTAVVCGGVAANSLLRKSVADWKHARCVFPSREYCTDNAVMVAALGYRYLIRGDRSFYGVTERSRIAHFSKRGGDRLAAQRSAASQPLF.

The Fe cation site is built by His111 and His115. Residues 133–137 (LASGG), Asp166, Gly179, and Asn275 each bind substrate. Asp300 is a binding site for Fe cation.

This sequence belongs to the KAE1 / TsaD family. Requires Fe(2+) as cofactor.

The protein resides in the cytoplasm. The catalysed reaction is L-threonylcarbamoyladenylate + adenosine(37) in tRNA = N(6)-L-threonylcarbamoyladenosine(37) in tRNA + AMP + H(+). In terms of biological role, required for the formation of a threonylcarbamoyl group on adenosine at position 37 (t(6)A37) in tRNAs that read codons beginning with adenine. Is involved in the transfer of the threonylcarbamoyl moiety of threonylcarbamoyl-AMP (TC-AMP) to the N6 group of A37, together with TsaE and TsaB. TsaD likely plays a direct catalytic role in this reaction. The chain is tRNA N6-adenosine threonylcarbamoyltransferase from Treponema pallidum (strain Nichols).